The chain runs to 350 residues: Xylene/toluene monooxygenase electron transfer component XylA (350 aa).

Residues 16-108 (PESTVSVRGQ…DLEIELDTVL (93 aa)) enclose the 2Fe-2S ferredoxin-type domain. Positions 52, 57, 60, and 92 each coordinate [2Fe-2S] cluster. The tract at residues 109 to 350 (GQALVPIETS…ADRFYNRPPC (242 aa)) is ferredoxin--NADH reductase. Residues 114–213 (PIETSALISK…RAPYGQFGLH (100 aa)) form the FAD-binding FR-type domain.

It belongs to the bacterial ring-hydroxylating dioxygenase ferredoxin reductase family. As to quaternary structure, monomer. The xylene/toluene monooxygenase is composed of two subunits: the electron transfer component XylA and the hydroxylase component XylM. Requires FAD as cofactor. [2Fe-2S] cluster serves as cofactor.

The protein localises to the cell inner membrane. It catalyses the reaction 2 reduced [2Fe-2S]-[ferredoxin] + NAD(+) + H(+) = 2 oxidized [2Fe-2S]-[ferredoxin] + NADH. Its activity is regulated as follows. The reductase activity is completely inhibited by quercetin (a common inhibitor of mammalian oxidoreductases) and p-chloromercuribenzoate, but not by iodoacetimide, N-ethylmaleimide and pyrrazole. In terms of biological role, component of a monooxygenase that catalyzes the first step in the degradation of xylenes and toluenes. XylA is responsible for the transport of electrons from the electron donor NADH to the terminal hydroxylase component, XylM. This Pseudomonas putida (Arthrobacter siderocapsulatus) protein is Xylene/toluene monooxygenase electron transfer component XylA.